A 350-amino-acid polypeptide reads, in one-letter code: [LysW]-L-2-aminoadipate/[LysW]-L-glutamate phosphate reductase (350 aa).

10 to 13 contacts NADP(+); that stretch reads SGYT. Residue cysteine 150 is part of the active site. Position 317 (asparagine 317) interacts with NADP(+).

The protein belongs to the NAGSA dehydrogenase family. Type 1 subfamily. LysY sub-subfamily.

It localises to the cytoplasm. The enzyme catalyses [amino-group carrier protein]-C-terminal-N-(1-carboxy-5-oxopentan-1-yl)-L-glutamine + phosphate + NADP(+) = [amino-group carrier protein]-C-terminal-N-(1-carboxy-5-phosphooxy-5-oxopentan-1-yl)-L-glutamine + NADPH + H(+). The catalysed reaction is [amino-group carrier protein]-C-terminal-gamma-(L-glutamyl-5-semialdehyde)-L-glutamate + phosphate + NADP(+) = [amino-group carrier protein]-C-terminal-gamma-(5-phospho-L-glutamyl)-L-glutamate + NADPH + H(+). Its pathway is amino-acid biosynthesis; L-lysine biosynthesis via AAA pathway; L-lysine from L-alpha-aminoadipate (Thermus route): step 3/5. The protein operates within amino-acid biosynthesis; L-arginine biosynthesis. Its function is as follows. Involved in both the arginine and lysine biosynthetic pathways. This is [LysW]-L-2-aminoadipate/[LysW]-L-glutamate phosphate reductase from Sulfolobus acidocaldarius (strain ATCC 33909 / DSM 639 / JCM 8929 / NBRC 15157 / NCIMB 11770).